We begin with the raw amino-acid sequence, 174 residues long: DKPHVNVGTIGHVDHGKILAEGGGAKKYEEIDNAPEERARGITINAAHVEYSTAARHYAHTDCPGHADYVKDPELGVKSVQKLLDAVDTYIPVPTRGTVVTGTLERGDECELLGHNKNIRSLERAEAGDNLGALVRGLVMVKPGSIQPHQKVEAQVYILSKEEGGRFTLRDGNK.

62 to 66 (DCPGH) is a GTP binding site. N6-succinyllysine is present on lysine 78. Threonine 103 carries the phosphothreonine modification. Residue serine 121 is modified to Phosphoserine. Lysine 161 is modified (N6-acetyllysine).

The protein belongs to the GTP-binding elongation factor family. EF-Tu/EF-1A subfamily.

The protein localises to the mitochondrion. It catalyses the reaction GTP + H2O = GDP + phosphate + H(+). In terms of biological role, GTP hydrolase that promotes the GTP-dependent binding of aminoacyl-tRNA to the A-site of ribosomes during protein biosynthesis. The polypeptide is Elongation factor Tu, mitochondrial (Mesocricetus auratus (Golden hamster)).